Reading from the N-terminus, the 144-residue chain is Large ribosomal subunit protein uL16 (144 aa).

The span at 1–19 (MLLPKRVKYRRQHRPKTTG) shows a compositional bias: basic residues. The interval 1–23 (MLLPKRVKYRRQHRPKTTGRSKG) is disordered.

This sequence belongs to the universal ribosomal protein uL16 family. Part of the 50S ribosomal subunit.

Its function is as follows. Binds 23S rRNA and is also seen to make contacts with the A and possibly P site tRNAs. The chain is Large ribosomal subunit protein uL16 from Staphylococcus epidermidis (strain ATCC 35984 / DSM 28319 / BCRC 17069 / CCUG 31568 / BM 3577 / RP62A).